The primary structure comprises 234 residues: MQQSGVPGSRGCALCPLLGVLFFQGVYVIFSLEIKADAHVRGYVGENIKLRCTFKSSSSITDKLTIDWTYRPPSSSRTESIFHYQSFQYPTTAGTFRDRISWVGDVYKGDASISISNPTMKDNGTFSCAVKNPPDVHHNIPATELTVTERGFGTMLSSVALLSILVFIPSTVVVILLLVRMGRKSAGLKKRSKSGYKKSSIEVSDDTDQEGDDCMAKLCVRCAECVDSDYEETY.

An N-terminal signal peptide occupies residues 1 to 31 (MQQSGVPGSRGCALCPLLGVLFFQGVYVIFS). Residues 32 to 148 (LEIKADAHVR…NIPATELTVT (117 aa)) enclose the Ig-like V-type domain. Over 32–158 (LEIKADAHVR…ERGFGTMLSS (127 aa)) the chain is Extracellular. Residues Cys-52 and Cys-128 are joined by a disulfide bond. Asn-123 is a glycosylation site (N-linked (GlcNAc...) asparagine). Residues 159–179 (VALLSILVFIPSTVVVILLLV) traverse the membrane as a helical segment. At 180 to 234 (RMGRKSAGLKKRSKSGYKKSSIEVSDDTDQEGDDCMAKLCVRCAECVDSDYEETY) the chain is on the cytoplasmic side.

The protein belongs to the myelin P0 protein family.

The protein resides in the membrane. Mediates homophilic cell-cell adhesion. This is Myelin protein zero-like protein 3 (MPZL3) from Bos taurus (Bovine).